The chain runs to 356 residues: MILFGSTGSIGVNALKLAALKNIPISALACGDNIALLNEQIARFKPQFVAIKDSKNKHLVKHDRVFIGQEGLEQILTECQDRLLLNAIVGFAGLKSTLKAKELGKNIALANKESLVVAGSFLKGAKFLPIDSEHVALKFLLEGKKNIAKLYITASGGAFYKYKIKDLNQVSVKDALKHPNWNMGAKITIDSATMANKLFEIIEAYHLYDFKESDALIEPRSLVHAMCEFKNGASTAYFSKADMKLAISDAIFEKQDTPILEAVDFSKMPALKFHKISTKKYPIFKLKNAFLKEPNLGVIINAANEVGVYNFLENKSGFLDIAQCIFKALDHFGAPKISSIEEVFEYDFKTREYLRS.

NADPH-binding residues include Thr7, Gly8, Ser9, Ile10, Gly31, Asn33, and Asn111. Position 112 (Lys112) interacts with 1-deoxy-D-xylulose 5-phosphate. Glu113 is an NADPH binding site. Asp131 is a binding site for Mn(2+). Residues Ser132, Glu133, Ser155, and His178 each contribute to the 1-deoxy-D-xylulose 5-phosphate site. Glu133 contributes to the Mn(2+) binding site. Gly184 contributes to the NADPH binding site. 4 residues coordinate 1-deoxy-D-xylulose 5-phosphate: Ser191, Asn196, Lys197, and Glu200. Residue Glu200 participates in Mn(2+) binding.

This sequence belongs to the DXR family. Mg(2+) is required as a cofactor. Mn(2+) serves as cofactor.

The enzyme catalyses 2-C-methyl-D-erythritol 4-phosphate + NADP(+) = 1-deoxy-D-xylulose 5-phosphate + NADPH + H(+). Its pathway is isoprenoid biosynthesis; isopentenyl diphosphate biosynthesis via DXP pathway; isopentenyl diphosphate from 1-deoxy-D-xylulose 5-phosphate: step 1/6. Functionally, catalyzes the NADPH-dependent rearrangement and reduction of 1-deoxy-D-xylulose-5-phosphate (DXP) to 2-C-methyl-D-erythritol 4-phosphate (MEP). This is 1-deoxy-D-xylulose 5-phosphate reductoisomerase from Campylobacter jejuni subsp. doylei (strain ATCC BAA-1458 / RM4099 / 269.97).